Consider the following 428-residue polypeptide: Trigger factor (428 aa).

Residues 163-248 (GDMVIIDYKG…IHEIKEKEVP (86 aa)) form the PPIase FKBP-type domain.

This sequence belongs to the FKBP-type PPIase family. Tig subfamily.

Its subcellular location is the cytoplasm. It carries out the reaction [protein]-peptidylproline (omega=180) = [protein]-peptidylproline (omega=0). In terms of biological role, involved in protein export. Acts as a chaperone by maintaining the newly synthesized protein in an open conformation. Functions as a peptidyl-prolyl cis-trans isomerase. The chain is Trigger factor from Alkaliphilus oremlandii (strain OhILAs) (Clostridium oremlandii (strain OhILAs)).